The following is a 314-amino-acid chain: Methionyl-tRNA formyltransferase (314 aa).

111–114 (SLLP) contributes to the (6S)-5,6,7,8-tetrahydrofolate binding site.

The protein belongs to the Fmt family.

The enzyme catalyses L-methionyl-tRNA(fMet) + (6R)-10-formyltetrahydrofolate = N-formyl-L-methionyl-tRNA(fMet) + (6S)-5,6,7,8-tetrahydrofolate + H(+). Functionally, attaches a formyl group to the free amino group of methionyl-tRNA(fMet). The formyl group appears to play a dual role in the initiator identity of N-formylmethionyl-tRNA by promoting its recognition by IF2 and preventing the misappropriation of this tRNA by the elongation apparatus. This is Methionyl-tRNA formyltransferase from Nitrobacter winogradskyi (strain ATCC 25391 / DSM 10237 / CIP 104748 / NCIMB 11846 / Nb-255).